Reading from the N-terminus, the 142-residue chain is MAKKVTGYLKLQVPAGAANPSPPIGPALGQRGLNIMEFCKAFNAQTQKIEKNTPIPVVITIYADRSFTFEMKTPPMSFFLKQAAKVQSGSKTPGRDSAGKVTKAQVREIAEKKMKDLNCDTVEAAMKMVEGSARSMGLEVAG.

This sequence belongs to the universal ribosomal protein uL11 family. In terms of assembly, part of the ribosomal stalk of the 50S ribosomal subunit. Interacts with L10 and the large rRNA to form the base of the stalk. L10 forms an elongated spine to which L12 dimers bind in a sequential fashion forming a multimeric L10(L12)X complex. Post-translationally, one or more lysine residues are methylated.

In terms of biological role, forms part of the ribosomal stalk which helps the ribosome interact with GTP-bound translation factors. The chain is Large ribosomal subunit protein uL11 from Afipia carboxidovorans (strain ATCC 49405 / DSM 1227 / KCTC 32145 / OM5) (Oligotropha carboxidovorans).